The chain runs to 122 residues: Biogenesis of lysosome-related organelles complex 1 subunit CNL1 (122 aa).

Over residues 1 to 10 (MQDNSSHSRE) the composition is skewed to basic and acidic residues. The interval 1-21 (MQDNSSHSRESASAGDDPLGI) is disordered. Residues 63 to 95 (ENTIDKNIAKFKELLEKCDTLENHYEMLNQLAI) adopt a coiled-coil conformation.

It belongs to the BLOC1S4 family. Component of the biogenesis of lysosome-related organelles complex-1 (BLOC-1) composed of at least BLI1, BLS1, CNL1, KXD1, SNN1 and VAB2.

The protein localises to the cytoplasm. Its function is as follows. Component of the biogenesis of lysosome-related organelles complex-1 (BLOC-1), a complex that is involved in endosomal cargo sorting. The sequence is that of Biogenesis of lysosome-related organelles complex 1 subunit CNL1 (CNL1) from Saccharomyces cerevisiae (strain ATCC 204508 / S288c) (Baker's yeast).